The chain runs to 354 residues: Protein RecA (354 aa).

An ATP-binding site is contributed by 67–74; sequence GPESSGKT. Residues 333–354 are disordered; it reads MNEFVPSSEEQAEASLSEDHDQ.

It belongs to the RecA family.

Its subcellular location is the cytoplasm. In terms of biological role, can catalyze the hydrolysis of ATP in the presence of single-stranded DNA, the ATP-dependent uptake of single-stranded DNA by duplex DNA, and the ATP-dependent hybridization of homologous single-stranded DNAs. It interacts with LexA causing its activation and leading to its autocatalytic cleavage. In Laribacter hongkongensis (strain HLHK9), this protein is Protein RecA.